A 131-amino-acid polypeptide reads, in one-letter code: Profilin (131 aa).

It belongs to the profilin family. In terms of assembly, occurs in many kinds of cells as a complex with monomeric actin in a 1:1 ratio.

The protein localises to the cytoplasm. Its subcellular location is the cytoskeleton. Its function is as follows. Binds to actin and affects the structure of the cytoskeleton. At high concentrations, profilin prevents the polymerization of actin, whereas it enhances it at low concentrations. Has a high affinity for poly-proline. The sequence is that of Profilin from Citrullus lanatus (Watermelon).